A 716-amino-acid polypeptide reads, in one-letter code: Mitogen-activated protein kinase kinase kinase 5 (716 aa).

The span at 1 to 27 (MRWLPQISFSSPSSSPSSSLKPVASYS) shows a compositional bias: low complexity. Disordered stretches follow at residues 1-42 (MRWL…DRFH), 74-98 (ASTS…VPRS), 119-180 (AANA…YWVN), and 238-302 (YDIT…VTNG). A compositionally biased stretch (basic and acidic residues) spans 31 to 40 (DPDRNQDRDR). Over residues 75 to 91 (STSSSTFDSGLTRSPSA) the composition is skewed to polar residues. Over residues 124–137 (GLDDRDRDPERLIS) the composition is skewed to basic and acidic residues. Polar residues-rich tracts occupy residues 138–150 (DRTS…TSVN), 162–173 (ENSSYQDFSPRN), and 242–251 (AFSTDNSPIH). Residues 263–273 (RSPQPSRPSSP) are compositionally biased toward low complexity. The Protein kinase domain maps to 346–607 (WKKGKLIGRG…ASMLLEHRFL (262 aa)). Residues 352–360 (IGRGTFGSV) and Lys-375 each bind ATP. Asp-472 (proton acceptor) is an active-site residue. Residues 610 to 633 (SLQPTSPSNSDVSQLFNGMNITEP) show a composition bias toward polar residues. Residues 610 to 716 (SLQPTSPSNS…RRTGVTSDHL (107 aa)) are disordered. Ser-617 and Ser-622 each carry phosphoserine; by PBL27. A compositionally biased stretch (basic and acidic residues) spans 634 to 648 (SSRREKPNFKLDQVP). Polar residues-rich tracts occupy residues 652 to 661 (NMTSSESESG) and 674 to 685 (LTGTVNRLSPRS). Phosphoserine; by PBL27 occurs at positions 658 and 660. Position 677 is a phosphothreonine; by PBL27 (Thr-677). At Ser-685 the chain carries Phosphoserine; by PBL27. Over residues 703-716 (SSDRRRTGVTSDHL) the composition is skewed to basic and acidic residues.

It belongs to the protein kinase superfamily. STE Ser/Thr protein kinase family. MAP kinase kinase kinase subfamily. In terms of assembly, interacts with PBL27 at the plasma membrane; disassociation is induced by chitin perception by the CERK1 complex. Interacts with MKK2, MKK4, and MKK5 mainly in the cytosol. Post-translationally, phosphorylated by PBL27 during chitin-mediated signaling in a CERK1-dependent manner. In terms of tissue distribution, mostly expressed in flower buds. Also present in pollen, roots, leaves and seedlings, and, at low levels, in stems and immature siliques.

Its subcellular location is the cell membrane. The protein resides in the cytoplasm. It is found in the cytosol. The enzyme catalyses L-seryl-[protein] + ATP = O-phospho-L-seryl-[protein] + ADP + H(+). It catalyses the reaction L-threonyl-[protein] + ATP = O-phospho-L-threonyl-[protein] + ADP + H(+). Functionally, mitogen-activated protein kinase (MAPK) involved in the transduction of signal between the host cell surface chitin receptor complex CERK1-LYK5 and the intracellular MAPK cascade that leads to chitin-induced immunity. Phosphorylates and activates MAPK targets (e.g. MKK4, MKK5, and possibly MKK2) when phosphorylated by PBL27 after elicitation by chitin. Required for resistance to the fungus A.brassicicola. The protein is Mitogen-activated protein kinase kinase kinase 5 of Arabidopsis thaliana (Mouse-ear cress).